The chain runs to 538 residues: Fusion glycoprotein F0 (538 aa).

Positions 1-18 (MDVRICLLLFLISNPSSC) are cleaved as a signal peptide. Topologically, residues 19–489 (IQETYNEESC…LLGADAKSKA (471 aa)) are extracellular. 7 cysteine pairs are disulfide-bonded: Cys28–Cys407, Cys60–Cys182, Cys283–Cys311, Cys292–Cys301, Cys326–Cys335, Cys350–Cys361, and Cys384–Cys390. Asn57 is a glycosylation site (N-linked (GlcNAc...) asparagine; by host). Fusion peptide regions lie at residues 103–124 (FVLGAIALGVATAAAVTAGVAL) and 103–127 (FVLGAIALGVATAAAVTAGVALAKT). Positions 125–153 (AKTIRLEGEVKAIKNALRNTNEAVSTLGN) form a coiled coil. Asn353 carries an N-linked (GlcNAc...) asparagine; by host glycan. Positions 459 to 484 (ALDQVFESIDRSQDLIDKSNDLLGAD) form a coiled coil. A helical transmembrane segment spans residues 490–510 (GIAIAIVVLVILGIFFLLAVI). Residues 511 to 538 (YYCSRVRKTKPKHDYPATTGHSSMAYVS) are Cytoplasmic-facing. The S-palmitoyl cysteine; by host moiety is linked to residue Cys513.

It belongs to the paramyxoviruses fusion glycoprotein family. In terms of assembly, homotrimer. Heterodimer with fusion protein F2; disulfide-linked. As a heterodimer with F2, interacts with host heparan sulfate. Part of a complex composed of F1, F2 and G glycoproteins. Homotrimer. Heterodimer with fusion protein F1; disulfide-linked. As a heterodimer with F1, interacts with host heparan sulfate. Part of a complex composed of F1, F2 and G glycoproteins. The F glycoprotein is synthesized as a F0 inactive precursor that is heavily N-glycosylated and processed.

Its subcellular location is the host Golgi apparatus membrane. The protein resides in the virion membrane. The protein localises to the host cell membrane. In terms of biological role, inactive precursor that is cleaved to give rise to the mature F1 and F2 fusion glycoproteins. Functionally, class I viral fusion protein. Under the current model, the protein has at least 3 conformational states: pre-fusion native state, pre-hairpin intermediate state, and post-fusion hairpin state. During viral and plasma cell membrane fusion, the coiled coil regions assume a trimer-of-hairpins structure, positioning the fusion peptide in close proximity to the C-terminal region of the ectodomain. The formation of this structure appears to drive apposition and subsequent fusion of viral and cellular membranes leading to delivery of the nucleocapsid into the cytoplasm. This fusion is pH independent and occurs at the plasma or endosomal membrane. The trimer of F1-F2 (F protein) also facilitates the attachment to host cell by binding to host heparan sulfate. Major determinant of the species specificity of RSV infection. The trimer of F1-F2 (F protein) also facilitates the attachment to host cell by binding to host heparan sulfate. This is Fusion glycoprotein F0 (F) from Meleagris gallopavo (Wild turkey).